The chain runs to 251 residues: 5'-nucleotidase SurE (251 aa).

Positions 8, 9, 39, and 95 each coordinate a divalent metal cation.

Belongs to the SurE nucleotidase family. Requires a divalent metal cation as cofactor.

It is found in the cytoplasm. The catalysed reaction is a ribonucleoside 5'-phosphate + H2O = a ribonucleoside + phosphate. In terms of biological role, nucleotidase that shows phosphatase activity on nucleoside 5'-monophosphates. The sequence is that of 5'-nucleotidase SurE from Ralstonia nicotianae (strain ATCC BAA-1114 / GMI1000) (Ralstonia solanacearum).